Reading from the N-terminus, the 364-residue chain is tRNA 2-selenouridine synthase (364 aa).

A Rhodanese domain is found at 14–137 (LIADTPIIDV…LRQTAIQATI (124 aa)). C97 serves as the catalytic S-selanylcysteine intermediate.

The protein belongs to the SelU family. As to quaternary structure, monomer.

The catalysed reaction is 5-methylaminomethyl-2-thiouridine(34) in tRNA + selenophosphate + (2E)-geranyl diphosphate + H2O + H(+) = 5-methylaminomethyl-2-selenouridine(34) in tRNA + (2E)-thiogeraniol + phosphate + diphosphate. The enzyme catalyses 5-methylaminomethyl-2-thiouridine(34) in tRNA + (2E)-geranyl diphosphate = 5-methylaminomethyl-S-(2E)-geranyl-thiouridine(34) in tRNA + diphosphate. It carries out the reaction 5-methylaminomethyl-S-(2E)-geranyl-thiouridine(34) in tRNA + selenophosphate + H(+) = 5-methylaminomethyl-2-(Se-phospho)selenouridine(34) in tRNA + (2E)-thiogeraniol. It catalyses the reaction 5-methylaminomethyl-2-(Se-phospho)selenouridine(34) in tRNA + H2O = 5-methylaminomethyl-2-selenouridine(34) in tRNA + phosphate. Functionally, involved in the post-transcriptional modification of the uridine at the wobble position (U34) of tRNA(Lys), tRNA(Glu) and tRNA(Gln). Catalyzes the conversion of 2-thiouridine (S2U-RNA) to 2-selenouridine (Se2U-RNA). Acts in a two-step process involving geranylation of 2-thiouridine (S2U) to S-geranyl-2-thiouridine (geS2U) and subsequent selenation of the latter derivative to 2-selenouridine (Se2U) in the tRNA chain. The polypeptide is tRNA 2-selenouridine synthase (Escherichia coli O17:K52:H18 (strain UMN026 / ExPEC)).